A 601-amino-acid chain; its full sequence is Ubiquitin carboxyl-terminal hydrolase MINDY-2 (601 aa).

Positions Met-1–Ala-205 are disordered. Residues Glu-24–Glu-34 show a composition bias toward basic and acidic residues. Thr-62 carries the phosphothreonine modification. Ser-82 carries the phosphoserine modification. Composition is skewed to low complexity over residues Glu-127–Glu-141, Ser-148–Phe-169, and Gly-186–Pro-195. Cys-244 functions as the Nucleophile in the catalytic mechanism. The active-site Proton acceptor is His-426. The segment at Gly-485 to Gln-537 is ubiquitin-binding domain (UBD). The segment at Arg-534–Leu-601 is disordered. The span at Ser-536–Ser-570 shows a compositional bias: low complexity. Positions Ser-577–Leu-601 are enriched in basic and acidic residues.

It belongs to the MINDY deubiquitinase family. FAM63 subfamily.

The catalysed reaction is Thiol-dependent hydrolysis of ester, thioester, amide, peptide and isopeptide bonds formed by the C-terminal Gly of ubiquitin (a 76-residue protein attached to proteins as an intracellular targeting signal).. In terms of biological role, hydrolase that can remove 'Lys-48'-linked conjugated ubiquitin from proteins. Can also bind to polyubiquitin chains of different linkage types, including 'Lys-6', 'Lys-11', 'Lys-29', 'Lys-33' and 'Lys-63'. May play a regulatory role at the level of protein turnover. This is Ubiquitin carboxyl-terminal hydrolase MINDY-2 (Mindy2) from Mus musculus (Mouse).